Reading from the N-terminus, the 362-residue chain is Exopolygalacturonase (362 aa).

PbH1 repeat units lie at residues 138–164 (CKNLTFERFKISAAETSINTDGIHIGR), 165–186 (SDGVNIINTEIKTGDDCISLGD), 188–208 (SKNINITNITCGPGHGISVGS), and 218–239 (VVGIYVKNCTITGSQNGVRIKT). Asn140 is a glycosylation site (N-linked (GlcNAc...) asparagine). Catalysis depends on Asp179, which acts as the Proton donor. 2 N-linked (GlcNAc...) asparagine glycosylation sites follow: Asn192 and Asn195. Residue His202 is part of the active site. Asn225 carries N-linked (GlcNAc...) asparagine glycosylation.

Belongs to the glycosyl hydrolase 28 family. As to expression, pollen tubes growing through the style during pollination.

It localises to the secreted. Its subcellular location is the cell wall. The catalysed reaction is [(1-&gt;4)-alpha-D-galacturonosyl](n) + H2O = alpha-D-galacturonate + [(1-&gt;4)-alpha-D-galacturonosyl](n-1). Its function is as follows. May function in depolymerizing pectin during pollen development, germination, and tube growth. Acts as an exo-polygalacturonase. In Oenothera organensis (Evening primrose), this protein is Exopolygalacturonase.